The sequence spans 149 residues: SsrA-binding protein (149 aa).

Belongs to the SmpB family.

The protein resides in the cytoplasm. Functionally, required for rescue of stalled ribosomes mediated by trans-translation. Binds to transfer-messenger RNA (tmRNA), required for stable association of tmRNA with ribosomes. tmRNA and SmpB together mimic tRNA shape, replacing the anticodon stem-loop with SmpB. tmRNA is encoded by the ssrA gene; the 2 termini fold to resemble tRNA(Ala) and it encodes a 'tag peptide', a short internal open reading frame. During trans-translation Ala-aminoacylated tmRNA acts like a tRNA, entering the A-site of stalled ribosomes, displacing the stalled mRNA. The ribosome then switches to translate the ORF on the tmRNA; the nascent peptide is terminated with the 'tag peptide' encoded by the tmRNA and targeted for degradation. The ribosome is freed to recommence translation, which seems to be the essential function of trans-translation. This is SsrA-binding protein from Carboxydothermus hydrogenoformans (strain ATCC BAA-161 / DSM 6008 / Z-2901).